Here is a 381-residue protein sequence, read N- to C-terminus: Cytochrome b (381 aa).

4 helical membrane-spanning segments follow: residues 36–56 (FGSL…FLTM), 80–101 (WLIR…YIHI), 116–136 (WMVG…GYVL), and 181–201 (FYTF…IHLL). Heme b is bound by residues histidine 86 and histidine 100. 2 residues coordinate heme b: histidine 185 and histidine 199. A ubiquinone is bound at residue histidine 204. The next 4 membrane-spanning stretches (helical) occupy residues 229–249 (FKDM…TLTN), 291–311 (LGGV…PLTF), 323–343 (MNQI…WIGA), and 350–370 (YVFV…INPM).

It belongs to the cytochrome b family. The main subunits of complex b-c1 are: cytochrome b, cytochrome c1 and the Rieske protein. Heme b serves as cofactor.

It is found in the mitochondrion inner membrane. Its function is as follows. Component of the ubiquinol-cytochrome c reductase complex (complex III or cytochrome b-c1 complex) that is part of the mitochondrial respiratory chain. The b-c1 complex mediates electron transfer from ubiquinol to cytochrome c. Contributes to the generation of a proton gradient across the mitochondrial membrane that is then used for ATP synthesis. The polypeptide is Cytochrome b (MT-CYB) (Ostrinia nubilalis (European corn borer)).